A 325-amino-acid chain; its full sequence is Dehydrogenase/reductase SDR family member 7B (325 aa).

At 1-17 the chain is on the cytoplasmic side; it reads MISPSSRKGMLKERAMD. The helical; Signal-anchor for type II membrane protein transmembrane segment at 18–38 threads the bilayer; the sequence is LVTQTTILPLLFGCLGIFSLF. Residues 39–325 are Lumenal-facing; the sequence is RLLQRTRSKA…ARKERKSKNS (287 aa). NAD(+) is bound by residues S62 and L64. S194 provides a ligand contact to substrate. Positions 207, 211, and 242 each coordinate NAD(+). Catalysis depends on Y207, which acts as the Proton acceptor.

Belongs to the short-chain dehydrogenases/reductases (SDR) family.

It is found in the endoplasmic reticulum membrane. Putative oxidoreductase. The polypeptide is Dehydrogenase/reductase SDR family member 7B (Dhrs7b) (Rattus norvegicus (Rat)).